The primary structure comprises 156 residues: Ribosomal RNA large subunit methyltransferase H (156 aa).

Residues leucine 72, glycine 104, and 123 to 128 each bind S-adenosyl-L-methionine; that span reads FGKMVW.

The protein belongs to the RNA methyltransferase RlmH family. In terms of assembly, homodimer.

It is found in the cytoplasm. It carries out the reaction pseudouridine(1915) in 23S rRNA + S-adenosyl-L-methionine = N(3)-methylpseudouridine(1915) in 23S rRNA + S-adenosyl-L-homocysteine + H(+). Functionally, specifically methylates the pseudouridine at position 1915 (m3Psi1915) in 23S rRNA. This Ruegeria sp. (strain TM1040) (Silicibacter sp.) protein is Ribosomal RNA large subunit methyltransferase H.